The sequence spans 346 residues: Sensor histidine kinase GraS (346 aa).

Transmembrane regions (helical) follow at residues 15–35 (MNWI…SLID) and 43–63 (LFYI…LTYF). The region spanning 126 to 332 (EFVHDIKTPV…TVRLIFPLQN (207 aa)) is the Histidine kinase domain.

In terms of assembly, interacts with GraX.

The protein localises to the cell membrane. It catalyses the reaction ATP + protein L-histidine = ADP + protein N-phospho-L-histidine.. Member of the two-component regulatory system GraR/GraS involved in resistance against cationic antimicrobial peptides (CAMPs). Functions as a sensor protein kinase which phosphorylates GraR through the auxiliary protein GraX. In turn, GraR up-regulates many genes such as adhesins, exoproteins, transporters, toxins, and proteins involved in cell wall synthesis. Down-regulates the expression of many genes involved in RNA and amino acid synthesis or glycolysis. The polypeptide is Sensor histidine kinase GraS (graS) (Staphylococcus aureus (strain Mu50 / ATCC 700699)).